Consider the following 452-residue polypeptide: MFKSSKFKGKKACVLGMGKSGLAAARLLAENGFSVLISDGGKREIPGNLHKNIEVETGGHTNKILDCGFIVKSPGISSNMPVLKKIKNKKIPIFSEIEISISFLPKGCRIFAVTGTNGKTTTTMLLSEILKQFIKNKEFNKNVFTVGNIGCPLAEVMSEIKQHDLIVMEVSSYQLEDSSYFKPYAATILNITPDHIDHHGSFKKYLDAKSKIFKFQTQKDIAVINSADKNCLKAAKNIKSKLYGFATTPLQQIRSHVFYDGDELVFSAGERISPPKLPGIHNVENAMAASLLALAAGVDSQSIQQAFNKFKTVEHRIELLGIKKGISFINDSKATNIDSTIIALRSMPDGKKTWLILGGQDKGSPYGVLLPLLETKCKKVLLVGQAAAKIKKDLPGYKYFNVCGTIDKAVEYAFNNAQKEDIILLSPACASFDQFNNFEERGKFFKQIYKSL.

115-121 (GTNGKTT) contacts ATP.

It belongs to the MurCDEF family.

It localises to the cytoplasm. It carries out the reaction UDP-N-acetyl-alpha-D-muramoyl-L-alanine + D-glutamate + ATP = UDP-N-acetyl-alpha-D-muramoyl-L-alanyl-D-glutamate + ADP + phosphate + H(+). It functions in the pathway cell wall biogenesis; peptidoglycan biosynthesis. Functionally, cell wall formation. Catalyzes the addition of glutamate to the nucleotide precursor UDP-N-acetylmuramoyl-L-alanine (UMA). The sequence is that of UDP-N-acetylmuramoylalanine--D-glutamate ligase from Elusimicrobium minutum (strain Pei191).